The chain runs to 313 residues: Tyrosine recombinase XerC (313 aa).

One can recognise a Core-binding (CB) domain in the interval 1–85 (MNDQVEAFLR…AVKSFFAFLT (85 aa)). The 186-residue stretch at 106–291 (DLPRALTPHQ…NHASSAQPVR (186 aa)) folds into the Tyr recombinase domain. Residues Arg147, Lys171, His243, Arg246, and His269 contribute to the active site. Tyr278 serves as the catalytic O-(3'-phospho-DNA)-tyrosine intermediate.

Belongs to the 'phage' integrase family. XerC subfamily. In terms of assembly, forms a cyclic heterotetrameric complex composed of two molecules of XerC and two molecules of XerD.

The protein resides in the cytoplasm. In terms of biological role, site-specific tyrosine recombinase, which acts by catalyzing the cutting and rejoining of the recombining DNA molecules. The XerC-XerD complex is essential to convert dimers of the bacterial chromosome into monomers to permit their segregation at cell division. It also contributes to the segregational stability of plasmids. In Roseiflexus sp. (strain RS-1), this protein is Tyrosine recombinase XerC.